Here is a 217-residue protein sequence, read N- to C-terminus: ATP-dependent Clp protease proteolytic subunit (217 aa).

Ser-121 serves as the catalytic Nucleophile. His-146 is an active-site residue.

It belongs to the peptidase S14 family. Fourteen ClpP subunits assemble into 2 heptameric rings which stack back to back to give a disk-like structure with a central cavity, resembling the structure of eukaryotic proteasomes.

It localises to the cytoplasm. It catalyses the reaction Hydrolysis of proteins to small peptides in the presence of ATP and magnesium. alpha-casein is the usual test substrate. In the absence of ATP, only oligopeptides shorter than five residues are hydrolyzed (such as succinyl-Leu-Tyr-|-NHMec, and Leu-Tyr-Leu-|-Tyr-Trp, in which cleavage of the -Tyr-|-Leu- and -Tyr-|-Trp bonds also occurs).. In terms of biological role, cleaves peptides in various proteins in a process that requires ATP hydrolysis. Has a chymotrypsin-like activity. Plays a major role in the degradation of misfolded proteins. The polypeptide is ATP-dependent Clp protease proteolytic subunit (Burkholderia mallei (strain NCTC 10247)).